Here is a 238-residue protein sequence, read N- to C-terminus: ATP synthase subunit a, chloroplastic (238 aa).

Helical transmembrane passes span 27–47 (GQVL…SFLG), 86–106 (VPFL…GALL), 125–145 (INTT…AGIS), 190–210 (LVVG…IMLL), and 211–231 (GVFT…AYIN).

The protein belongs to the ATPase A chain family. As to quaternary structure, F-type ATPases have 2 components, F(1) - the catalytic core - and F(0) - the membrane proton channel. F(1) has five subunits: alpha(3), beta(3), gamma(1), delta(1), epsilon(1). F(0) has four main subunits: a(1), b(1), b'(1) and c(10-14). The alpha and beta chains form an alternating ring which encloses part of the gamma chain. F(1) is attached to F(0) by a central stalk formed by the gamma and epsilon chains, while a peripheral stalk is formed by the delta, b and b' chains.

It localises to the plastid. The protein localises to the chloroplast thylakoid membrane. Functionally, f(1)F(0) ATP synthase produces ATP from ADP in the presence of a proton or sodium gradient. F-type ATPases consist of two structural domains, F(1) containing the extramembraneous catalytic core and F(0) containing the membrane proton channel, linked together by a central stalk and a peripheral stalk. During catalysis, ATP synthesis in the catalytic domain of F(1) is coupled via a rotary mechanism of the central stalk subunits to proton translocation. This is ATP synthase subunit a, chloroplastic from Chlamydomonas reinhardtii (Chlamydomonas smithii).